A 149-amino-acid polypeptide reads, in one-letter code: Nucleoside diphosphate kinase (149 aa).

ATP is bound by residues Lys-9, Phe-57, Arg-85, Thr-91, Arg-102, and Asn-112. The active-site Pros-phosphohistidine intermediate is the His-115.

It belongs to the NDK family. It depends on Mg(2+) as a cofactor.

The protein resides in the cytoplasm. The enzyme catalyses a 2'-deoxyribonucleoside 5'-diphosphate + ATP = a 2'-deoxyribonucleoside 5'-triphosphate + ADP. It catalyses the reaction a ribonucleoside 5'-diphosphate + ATP = a ribonucleoside 5'-triphosphate + ADP. Its function is as follows. Major role in the synthesis of nucleoside triphosphates other than ATP. The ATP gamma phosphate is transferred to the NDP beta phosphate via a ping-pong mechanism, using a phosphorylated active-site intermediate. This is Nucleoside diphosphate kinase from Methanoculleus marisnigri (strain ATCC 35101 / DSM 1498 / JR1).